A 709-amino-acid chain; its full sequence is Ribosomal RNA large subunit methyltransferase K/L (709 aa).

The region spanning 43–154 (LAYRITLWTR…NGVITIAMNF (112 aa)) is the THUMP domain.

It belongs to the methyltransferase superfamily. RlmKL family.

It localises to the cytoplasm. The enzyme catalyses guanosine(2445) in 23S rRNA + S-adenosyl-L-methionine = N(2)-methylguanosine(2445) in 23S rRNA + S-adenosyl-L-homocysteine + H(+). It catalyses the reaction guanosine(2069) in 23S rRNA + S-adenosyl-L-methionine = N(2)-methylguanosine(2069) in 23S rRNA + S-adenosyl-L-homocysteine + H(+). Functionally, specifically methylates the guanine in position 2445 (m2G2445) and the guanine in position 2069 (m7G2069) of 23S rRNA. In Shewanella sp. (strain W3-18-1), this protein is Ribosomal RNA large subunit methyltransferase K/L.